We begin with the raw amino-acid sequence, 344 residues long: Cyclin-G2 (344 aa).

The disordered stretch occupies residues 298-324; that stretch reads CFDGSESEDSGEDMSCGEESLSSSPPS. Acidic residues predominate over residues 302–313; the sequence is SESEDSGEDMSC.

The protein belongs to the cyclin family. Cyclin G subfamily. In terms of tissue distribution, highest levels in intestine. Intermediate levels in spleen, brain and kidney. Low levels in testis, stomach, pancreas, liver, salivary gland and muscle. According to PubMed:9139721 also abundant in thymus.

The protein localises to the cytoplasm. The protein resides in the nucleus. Functionally, may play a role in growth regulation and in negative regulation of cell cycle progression. This Mus musculus (Mouse) protein is Cyclin-G2 (Ccng2).